The sequence spans 418 residues: STE20-related kinase adapter protein beta (418 aa).

The Protein kinase domain maps to 58–369 (YELQVEIGRG…ASSLLSHVFF (312 aa)). ATP contacts are provided by residues 64 to 72 (IGRGFDNLT) and K89.

Belongs to the protein kinase superfamily. STE Ser/Thr protein kinase family. STE20 subfamily. As to quaternary structure, component of a trimeric complex composed of STK11/LKB1, STRAD (STRADA or STRADB) and CAB39/MO25 (CAB39/MO25alpha or CAB39L/MO25beta): the complex tethers STK11/LKB1 in the cytoplasm and stimulates its catalytic activity. Interacts with BIRC4/XIAP. These two proteins are likely to coexist in a complex with TAK1, TRAF6, TAB1 and TAB2.

The protein resides in the nucleus. It is found in the cytoplasm. In terms of biological role, pseudokinase which, in complex with CAB39/MO25 (CAB39/MO25alpha or CAB39L/MO25beta), binds to and activates STK11/LKB1. Adopts a closed conformation typical of active protein kinases and binds STK11/LKB1 as a pseudosubstrate, promoting conformational change of STK11/LKB1 in an active conformation. This Mus musculus (Mouse) protein is STE20-related kinase adapter protein beta (Stradb).